Consider the following 242-residue polypeptide: Large ribosomal subunit protein uL1 (242 aa).

The protein belongs to the universal ribosomal protein uL1 family. As to quaternary structure, part of the 50S ribosomal subunit.

Its function is as follows. Binds directly to 23S rRNA. The L1 stalk is quite mobile in the ribosome, and is involved in E site tRNA release. Functionally, protein L1 is also a translational repressor protein, it controls the translation of the L11 operon by binding to its mRNA. The sequence is that of Large ribosomal subunit protein uL1 from Kitasatospora aureofaciens (Streptomyces aureofaciens).